A 499-amino-acid chain; its full sequence is Endosomal/lysosomal proton channel TMEM175 (499 aa).

A compositionally biased stretch (polar residues) spans methionine 1–alanine 10. The tract at residues methionine 1–glycine 26 is disordered. Residues methionine 1–serine 30 are Cytoplasmic-facing. The chain crosses the membrane as a helical span at residues histidine 31 to threonine 53. A RxxxFSD motif 1 motif is present at residues arginine 32–aspartate 38. Residues histidine 54–arginine 74 lie on the Lumenal side of the membrane. The interval threonine 55–glutamate 60 is short helix H1-1. The tract at residues glutamine 62–glutamine 68 is short helix H2-1. Residues isoleucine 75–glutamine 97 traverse the membrane as a helical segment. The Cytoplasmic segment spans residues valine 98–aspartate 103. The helical transmembrane segment at aspartate 104–serine 125 threads the bilayer. At leucine 126–leucine 135 the chain is on the lumenal side. The chain crosses the membrane as a helical span at residues glycine 136–tyrosine 157. Topologically, residues alanine 158–histidine 181 are cytoplasmic. Residues isoleucine 182 to phenylalanine 202 traverse the membrane as a helical segment. At phenylalanine 203–serine 207 the chain is on the lumenal side. The helical transmembrane segment at tyrosine 208 to cysteine 227 threads the bilayer. Topologically, residues lysine 228–serine 254 are cytoplasmic. The chain crosses the membrane as a helical span at residues lysine 255–glutamate 279. Positions arginine 257–aspartate 263 match the RxxxFSD motif 2 motif. Over aspartate 280–glutamine 306 the chain is Lumenal. The short helix H1-2 stretch occupies residues proline 285–serine 293. Residues serine 295–glycine 301 form a short helix H2-2 region. Residues phenylalanine 307–leucine 329 form a helical membrane-spanning segment. At histidine 330–threonine 335 the chain is on the cytoplasmic side. A helical membrane pass occupies residues glutamine 336 to glutamine 357. At glutamine 358–arginine 372 the chain is on the lumenal side. A helical membrane pass occupies residues valine 373–threonine 393. The Cytoplasmic portion of the chain corresponds to alanine 394–histidine 413. The chain crosses the membrane as a helical span at residues alanine 414–leucine 437. Over serine 438–arginine 439 the chain is Lumenal. The chain crosses the membrane as a helical span at residues phenylalanine 440–alanine 466. At leucine 467–cysteine 499 the chain is on the cytoplasmic side.

The protein belongs to the TMEM175 family. As to quaternary structure, homodimer. Interacts with AKT (AKT1, AKT2 or AKT3); leading to formation of the lysoK(GF) complex, which activates the channel. Interacts with LAMP1; inhibiting the proton channel activity of TMEM175. Interacts with LAMP2; inhibiting the proton channel activity of TMEM175.

It localises to the endosome membrane. The protein resides in the lysosome membrane. It catalyses the reaction H(+)(in) = H(+)(out). The enzyme catalyses K(+)(in) = K(+)(out). Its activity is regulated as follows. Active at low pH (under pH 4.6): proton channel activity is activated by luminal side protons. Polyunsaturated fatty acids, such as arachidonic acid, also activate the channel activity. Proton channel activity is directly inhibited by LAMP1 or LAMP2, facilitating lysosomal acidification. Channel activity is activated following interaction with AKT (AKT1, AKT2 or AKT3): interaction promotes activation from closed to an open state. Activation by AKT is independent of AKT serine/threonine-protein kinase activity. Functionally, proton-activated proton channel that catalyzes proton efflux from endosomes and lysosomes to maintain a steady-state pH. Activated at low pH (under pH 4.6) by luminal side protons: selectively mediates lysosomal proton release from lysosomes, eliciting a proton leak that balances V-ATPase activity to maintain pH homeostasis. Regulation of lumenal pH stability is required for autophagosome-lysosome fusion. Also acts as a potassium channel at higher pH, regulating potassium conductance in endosomes and lysosomes. Constitutes the pore-forming subunit of the lysoK(GF) complex, a complex activated by extracellular growth factors. The lysoK(GF) complex is composed of TMEM175 and AKT (AKT1, AKT2 or AKT3), a major target of growth factor receptors: in the complex, TMEM175 channel is opened by conformational changes by AKT, leading to its activation. The lysoK(GF) complex is required to protect neurons against stress-induced damage. The polypeptide is Endosomal/lysosomal proton channel TMEM175 (Rattus norvegicus (Rat)).